The following is a 271-amino-acid chain: WUSCHEL-related homeobox 6 (271 aa).

A DNA-binding region (homeobox; WUS-type) is located at residues 57 to 121; that stretch reads AATLRWNPTP…NHKARERLKR (65 aa). Positions 118–195 are disordered; it reads RLKRRRREGG…TEESDQRASE (78 aa). Composition is skewed to basic and acidic residues over residues 132 to 148 and 180 to 195; these read PHKD…RVDQ and NEDH…RASE.

This sequence belongs to the WUS homeobox family. In terms of tissue distribution, highly expressed in developing ovules. Present in developing primordia and differentiating organs but absent in mature organs.

It localises to the nucleus. In terms of biological role, transcription factor that plays a central role in ovule patterning by regulating cell proliferation of the maternal integuments and differentiation of the maegaspore mother cell (MCC). Involved in AGAMOUS (AG) repression in leaves. The chain is WUSCHEL-related homeobox 6 (WOX6) from Arabidopsis thaliana (Mouse-ear cress).